The chain runs to 105 residues: Small ribosomal subunit protein uS10 (105 aa).

This sequence belongs to the universal ribosomal protein uS10 family. In terms of assembly, part of the 30S ribosomal subunit.

Functionally, involved in the binding of tRNA to the ribosomes. This chain is Small ribosomal subunit protein uS10, found in Rickettsia conorii (strain ATCC VR-613 / Malish 7).